A 349-amino-acid chain; its full sequence is Probable protease SohB (349 aa).

The Periplasmic portion of the chain corresponds to 1–8 (MELLSEYG). Residues 9 to 29 (LFLAKIVTVVLAIAAIAAIIV) traverse the membrane as a helical segment. At 30-349 (NVAQRNKRQR…WWQRGQKPLM (320 aa)) the chain is on the cytoplasmic side. The active-site Nucleophile is Ser178. Lys230 functions as the Proton donor/acceptor in the catalytic mechanism.

The protein belongs to the peptidase S49 family.

The protein localises to the cell inner membrane. In terms of biological role, multicopy suppressor of the HtrA (DegP) null phenotype. It is possibly a protease, not essential for bacterial viability. This Escherichia coli (strain K12) protein is Probable protease SohB (sohB).